Reading from the N-terminus, the 484-residue chain is Cholesterol 22-hydroxylase CYP90B27 (484 aa).

The chain crosses the membrane as a helical span at residues 2–22 (ALELILVLSSLIVILIIFFSF). Residue Cys-429 participates in heme binding.

This sequence belongs to the cytochrome P450 family. In terms of tissue distribution, expressed in roots.

The protein localises to the membrane. The enzyme catalyses cholesterol + reduced [NADPH--hemoprotein reductase] + O2 = (22R)-hydroxycholesterol + oxidized [NADPH--hemoprotein reductase] + H2O + H(+). The protein operates within steroid metabolism; cholesterol metabolism. Its function is as follows. Involved in the biosynthesis of steroidal saponins and alkaloids natural products from cholesterol such as spirostane-type saponins and polyphyllins, compounds with pharmacological activity. Catalyzes the C-22 hydroxylation of cholesterol to form 22R-hydroxycholesterol. This is Cholesterol 22-hydroxylase CYP90B27 from Paris polyphylla (Daiswa polyphylla).